Here is a 498-residue protein sequence, read N- to C-terminus: Phosphoethanolamine N-methyltransferase 1 (498 aa).

S-adenosyl-L-homocysteine contacts are provided by Gly68, Arg73, Asp89, Asp115, Val116, and Asn134. Ser167, Ser172, Gly173, Arg177, and Tyr184 together coordinate phosphocholine. Residues 253–254 and Tyr262 each bind N-methylethanolamine phosphate; that span reads QY. Tyr262 lines the phosphocholine pocket. Positions 271, 272, 298, 320, 346, 347, and 363 each coordinate S-adenosyl-L-homocysteine. Residues Tyr394, Tyr408, Arg412, Tyr414, and Lys480 each coordinate phosphocholine. Residues Tyr394, Tyr408, 412 to 414, and Lys480 contribute to the N-methylethanolamine phosphate site; that span reads RGY.

Belongs to the class I-like SAM-binding methyltransferase superfamily. PEAMT family.

The enzyme catalyses phosphoethanolamine + S-adenosyl-L-methionine = N-methylethanolamine phosphate + S-adenosyl-L-homocysteine + H(+). The catalysed reaction is N-methylethanolamine phosphate + S-adenosyl-L-methionine = N,N-dimethylethanolamine phosphate + S-adenosyl-L-homocysteine + H(+). It catalyses the reaction N,N-dimethylethanolamine phosphate + S-adenosyl-L-methionine = phosphocholine + S-adenosyl-L-homocysteine + H(+). Its pathway is phospholipid metabolism; phosphatidylcholine biosynthesis; phosphocholine from phosphoethanolamine: step 1/1. With respect to regulation, inhibited by phosphatidic acid. In terms of biological role, involved in phosphocholine biosynthesis. Catalyzes the N-methylation of phosphoethanolamine, phosphomonomethylethanolamine and phosphodimethylethanolamine, the three methylation steps required to convert phosphoethanolamine to phosphocholine (PC). This is Phosphoethanolamine N-methyltransferase 1 from Triticum aestivum (Wheat).